The chain runs to 703 residues: Polyribonucleotide nucleotidyltransferase (703 aa).

Mg(2+) contacts are provided by aspartate 486 and aspartate 492. In terms of domain architecture, KH spans 554–613 (PKIITTNIDPEKIRDVIGPGGKMINKIIAETGVKIDIEEDGRVYILTPDSAAAQKALKII). The S1 motif domain maps to 623 to 691 (GEVYLGKVVR…KQGRINLSRK (69 aa)).

Belongs to the polyribonucleotide nucleotidyltransferase family. Mg(2+) is required as a cofactor.

The protein resides in the cytoplasm. It catalyses the reaction RNA(n+1) + phosphate = RNA(n) + a ribonucleoside 5'-diphosphate. Involved in mRNA degradation. Catalyzes the phosphorolysis of single-stranded polyribonucleotides processively in the 3'- to 5'-direction. This is Polyribonucleotide nucleotidyltransferase from Ruminiclostridium cellulolyticum (strain ATCC 35319 / DSM 5812 / JCM 6584 / H10) (Clostridium cellulolyticum).